A 440-amino-acid polypeptide reads, in one-letter code: MVHGYKGVQFQNWAKTYGCSPEMYYQPTSVGEVREVLALARQQNKKVKVVGGGHSPSDIACTDGFMIHMGKMNRVLQVDKEKKQVTVEAGILLTDLHPQLDKHGLALSNLGAVSDVTVGGVIGSGTHNTGIKHGILATQVVALTLMKADGTVLECSESSNADVFQAARVHLGCLGVILTVTLQCVPQFHLLETSFPSTLKEVLDNLDSHLKKSEYFRFLWFPHSENVSIIYQDHTNKEPSSASNWFWDYAIGFYLLEFLLWTSTYLPRLVGWINRFFFWLLFNCKKESSNLSHKIFSYECRFKQHVQDWAIPREKTKEALLELKAMLEAHPKVVAHYPVEVRFTRGDDILLSPCFQRDSCYMNIIMYRPYGKDVPRLDYWLAYETIMKKFGGRPHWAKAHNCTRKDFEKMYPAFHKFCDIREKLDPTGMFLNSYLEKVFY.

The FAD-binding PCMH-type domain maps to tyrosine 17–glutamine 187. Position 54 is a pros-8alpha-FAD histidine (histidine 54). Residues isoleucine 251–isoleucine 273 traverse the membrane as a helical segment.

The protein belongs to the oxygen-dependent FAD-linked oxidoreductase family. FAD is required as a cofactor. Highly expressed in liver.

The protein localises to the microsome membrane. It localises to the endoplasmic reticulum membrane. It carries out the reaction L-gulono-1,4-lactone + O2 = L-ascorbate + H2O2 + H(+). It functions in the pathway cofactor biosynthesis; L-ascorbate biosynthesis via UDP-alpha-D-glucuronate pathway; L-ascorbate from UDP-alpha-D-glucuronate: step 4/4. Its function is as follows. Oxidizes L-gulono-1,4-lactone to hydrogen peroxide and L-xylo-hexulonolactone which spontaneously isomerizes to L-ascorbate. The chain is L-gulonolactone oxidase (Gulo) from Mus musculus (Mouse).